The sequence spans 422 residues: Serine--tRNA ligase (422 aa).

Residue 227–229 coordinates L-serine; sequence TSE. ATP contacts are provided by residues 258 to 260 and V274; that span reads RRE. Position 281 (E281) interacts with L-serine. An ATP-binding site is contributed by 345-348; it reads ELTS. Position 380 (T380) interacts with L-serine.

This sequence belongs to the class-II aminoacyl-tRNA synthetase family. Type-1 seryl-tRNA synthetase subfamily. Homodimer. The tRNA molecule binds across the dimer.

The protein resides in the cytoplasm. The enzyme catalyses tRNA(Ser) + L-serine + ATP = L-seryl-tRNA(Ser) + AMP + diphosphate + H(+). It carries out the reaction tRNA(Sec) + L-serine + ATP = L-seryl-tRNA(Sec) + AMP + diphosphate + H(+). The protein operates within aminoacyl-tRNA biosynthesis; selenocysteinyl-tRNA(Sec) biosynthesis; L-seryl-tRNA(Sec) from L-serine and tRNA(Sec): step 1/1. Its function is as follows. Catalyzes the attachment of serine to tRNA(Ser). Is also able to aminoacylate tRNA(Sec) with serine, to form the misacylated tRNA L-seryl-tRNA(Sec), which will be further converted into selenocysteinyl-tRNA(Sec). The polypeptide is Serine--tRNA ligase (Thermobifida fusca (strain YX)).